Here is a 637-residue protein sequence, read N- to C-terminus: 1-deoxy-D-xylulose-5-phosphate synthase (637 aa).

Thiamine diphosphate contacts are provided by residues H75 and 116–118 (AHS). Mg(2+) is bound at residue D147. Thiamine diphosphate is bound by residues 148–149 (GA), N177, Y288, and E370. Mg(2+) is bound at residue N177.

Belongs to the transketolase family. DXPS subfamily. As to quaternary structure, homodimer. The cofactor is Mg(2+). Thiamine diphosphate serves as cofactor.

The enzyme catalyses D-glyceraldehyde 3-phosphate + pyruvate + H(+) = 1-deoxy-D-xylulose 5-phosphate + CO2. The protein operates within metabolic intermediate biosynthesis; 1-deoxy-D-xylulose 5-phosphate biosynthesis; 1-deoxy-D-xylulose 5-phosphate from D-glyceraldehyde 3-phosphate and pyruvate: step 1/1. In terms of biological role, catalyzes the acyloin condensation reaction between C atoms 2 and 3 of pyruvate and glyceraldehyde 3-phosphate to yield 1-deoxy-D-xylulose-5-phosphate (DXP). In Cupriavidus metallidurans (strain ATCC 43123 / DSM 2839 / NBRC 102507 / CH34) (Ralstonia metallidurans), this protein is 1-deoxy-D-xylulose-5-phosphate synthase.